The following is a 352-amino-acid chain: tRNA pseudouridine synthase D (352 aa).

The Nucleophile role is filled by aspartate 81. One can recognise a TRUD domain in the interval 157–303 (GVPNYFGAQR…MDHERRILRL (147 aa)).

This sequence belongs to the pseudouridine synthase TruD family.

The enzyme catalyses uridine(13) in tRNA = pseudouridine(13) in tRNA. Functionally, responsible for synthesis of pseudouridine from uracil-13 in transfer RNAs. The protein is tRNA pseudouridine synthase D of Pseudomonas entomophila (strain L48).